A 309-amino-acid chain; its full sequence is Homoserine O-succinyltransferase (309 aa).

Catalysis depends on cysteine 142, which acts as the Acyl-thioester intermediate. Residues lysine 163 and serine 192 each contribute to the substrate site. The Proton acceptor role is filled by histidine 235. Residue glutamate 237 is part of the active site. Substrate is bound at residue arginine 249.

Belongs to the MetA family. As to quaternary structure, homodimer.

The protein resides in the cytoplasm. It carries out the reaction L-homoserine + succinyl-CoA = O-succinyl-L-homoserine + CoA. Its pathway is amino-acid biosynthesis; L-methionine biosynthesis via de novo pathway; O-succinyl-L-homoserine from L-homoserine: step 1/1. In terms of biological role, transfers a succinyl group from succinyl-CoA to L-homoserine, forming succinyl-L-homoserine. This Escherichia coli O139:H28 (strain E24377A / ETEC) protein is Homoserine O-succinyltransferase.